The sequence spans 568 residues: Sphingosine-1-phosphate lyase 1 (568 aa).

At 1–41 the chain is on the lumenal side; sequence MPSTDLLTLKAFEPYLEILEVYSTKAKNYVNGHCTKYEPWQ. Residues 42 to 62 traverse the membrane as a helical; Signal-anchor for type III membrane protein segment; the sequence is LIAWSVVWTLLIVWGYEFVFQ. The Cytoplasmic segment spans residues 63–568; it reads PESLWSRFKK…SQMNGSPKPH (506 aa). K353 is modified (N6-(pyridoxal phosphate)lysine; alternate). Position 353 is an N6-acetyllysine; alternate (K353). 3'-nitrotyrosine occurs at positions 356 and 366. S564 carries the post-translational modification Phosphoserine.

Belongs to the group II decarboxylase family. Sphingosine-1-phosphate lyase subfamily. In terms of assembly, homodimer. It depends on pyridoxal 5'-phosphate as a cofactor.

Its subcellular location is the endoplasmic reticulum membrane. The enzyme catalyses sphinganine 1-phosphate = hexadecanal + phosphoethanolamine. It carries out the reaction sphing-4-enine 1-phosphate = (2E)-hexadecenal + phosphoethanolamine. Its pathway is lipid metabolism; sphingolipid metabolism. Functionally, cleaves phosphorylated sphingoid bases (PSBs), such as sphingosine-1-phosphate, into fatty aldehydes and phosphoethanolamine. Elevates stress-induced ceramide production and apoptosis. Required for global lipid homeostasis in liver and cholesterol homeostasis in fibroblasts. Involved in the regulation of pro-inflammatory response and neutrophil trafficking. Modulates neuronal autophagy via phosphoethanolamine production which regulates accumulation of aggregate-prone proteins such as APP. Seems to play a role in establishing neuronal contact sites and axonal maintenance. This is Sphingosine-1-phosphate lyase 1 from Pongo abelii (Sumatran orangutan).